A 404-amino-acid chain; its full sequence is SAC3 domain-containing protein 1 (404 aa).

Disordered regions lie at residues 1–58 (MAGR…GTCP) and 77–117 (RLEV…QLRP). Positions 12-21 (PPRPAAPHPR) are enriched in pro residues. The segment covering 87–101 (DPPRADPQRAVKEYS) has biased composition (basic and acidic residues). The PCI domain occupies 203-379 (QVQEGFGSLR…TCKVLVESKL (177 aa)). S402 bears the Phosphoserine mark.

The protein belongs to the SAC3 family. In terms of assembly, may be part of a SEM1-containing complex.

The protein localises to the cytoplasm. It localises to the cytoskeleton. It is found in the microtubule organizing center. Its subcellular location is the centrosome. The protein resides in the spindle. In terms of biological role, involved in centrosome duplication and mitotic progression. The chain is SAC3 domain-containing protein 1 (SAC3D1) from Homo sapiens (Human).